The following is a 213-amino-acid chain: Nicolin-1 (213 aa).

In terms of assembly, part of the neuronal tubulin polyglutamylase complex which contains TPGS1, TPGS2, TTLL1, LRRC49 and NICN1.

It is found in the nucleus. This is Nicolin-1 (NICN1) from Canis lupus familiaris (Dog).